The following is a 951-amino-acid chain: WD repeat-containing and planar cell polarity effector protein fritz (951 aa).

2 WD repeats span residues 304–343 (PMGA…TKYA) and 345–384 (QIEI…IGHQ). Polar residues-rich tracts occupy residues 709–720 (TLKSNSSLQQAP), 757–771 (IPDQ…STMP), and 818–828 (SILSNPANPAP). Disordered stretches follow at residues 709 to 776 (TLKS…SPPP), 816 to 883 (TASI…AARH), and 903 to 951 (EYLK…FGVV). Over residues 930–942 (SSKGGNSSSSSSS) the composition is skewed to low complexity.

The protein belongs to the WD repeat fritz family.

The protein localises to the cell membrane. It localises to the cytoplasm. It is found in the cytoskeleton. Its subcellular location is the cilium axoneme. Probable effector of the planar cell polarity signaling pathway which regulates the septin cytoskeleton in both ciliogenesis and collective cell movements. Functions cell autonomously to regulate wing cell hair polarity and number. This chain is WD repeat-containing and planar cell polarity effector protein fritz (frtz), found in Drosophila melanogaster (Fruit fly).